The chain runs to 269 residues: MVKDFSSQHPLGDVSPSQYKSEVRNLSFYYGSFLALKNINMMLHEKKVTALIGPSGCGKSTFLRCFNRMHDLYPGNRYMGDIILHPDNVNILSRSVDPIEVRMRISMVFQKPNPFPKSIYENVAYGLRVRGVRRRAILDEKVEDALRGAALWDEVKDRLHQLAYNLSGGQQQRLCIARALATDPEILLFDEPTSALDPIATASIEELIADLKDKVTILIVTHNMQQAARVSDYTAYMYLGEVIEFGVTDTIFIKPKNKQTEDYITGRFG.

Residues 21–264 (SEVRNLSFYY…PKNKQTEDYI (244 aa)) form the ABC transporter domain. An ATP-binding site is contributed by 53–60 (GPSGCGKS).

The protein belongs to the ABC transporter superfamily. Phosphate importer (TC 3.A.1.7) family. The complex is composed of two ATP-binding proteins (PstB), two transmembrane proteins (PstC and PstA) and a solute-binding protein (PstS).

It is found in the cell inner membrane. It catalyses the reaction phosphate(out) + ATP + H2O = ADP + 2 phosphate(in) + H(+). In terms of biological role, part of the ABC transporter complex PstSACB involved in phosphate import. Responsible for energy coupling to the transport system. The sequence is that of Phosphate import ATP-binding protein PstB from Nitrosospira multiformis (strain ATCC 25196 / NCIMB 11849 / C 71).